Here is a 362-residue protein sequence, read N- to C-terminus: Methylthioribose-1-phosphate isomerase (362 aa).

Asp-252 (proton donor) is an active-site residue.

It belongs to the eIF-2B alpha/beta/delta subunits family. MtnA subfamily.

It is found in the cytoplasm. Its subcellular location is the nucleus. The catalysed reaction is 5-(methylsulfanyl)-alpha-D-ribose 1-phosphate = 5-(methylsulfanyl)-D-ribulose 1-phosphate. Its pathway is amino-acid biosynthesis; L-methionine biosynthesis via salvage pathway; L-methionine from S-methyl-5-thio-alpha-D-ribose 1-phosphate: step 1/6. Its function is as follows. Catalyzes the interconversion of methylthioribose-1-phosphate (MTR-1-P) into methylthioribulose-1-phosphate (MTRu-1-P). The chain is Methylthioribose-1-phosphate isomerase from Drosophila pseudoobscura pseudoobscura (Fruit fly).